Here is a 204-residue protein sequence, read N- to C-terminus: MSDRIARIERTTRESSIVVELNLDGTGIVDVSTGVPFFDHMLNALGTHASFDLDVKAKGDVEIDAHHTVEDTAIVFGQALGQALGDKKGIRRFGDAFIPMDETLAHASVDVSGRPYCVHTGEPDYMVHSVIGGYPGVPYHAVINRHVFESIALNARIALHVRVLYGRDQHHITEAEYKAVARALREAVEPDPRVSGVPSTKGTL.

Belongs to the imidazoleglycerol-phosphate dehydratase family.

Its subcellular location is the cytoplasm. The enzyme catalyses D-erythro-1-(imidazol-4-yl)glycerol 3-phosphate = 3-(imidazol-4-yl)-2-oxopropyl phosphate + H2O. Its pathway is amino-acid biosynthesis; L-histidine biosynthesis; L-histidine from 5-phospho-alpha-D-ribose 1-diphosphate: step 6/9. The chain is Imidazoleglycerol-phosphate dehydratase from Rhodococcus erythropolis (strain PR4 / NBRC 100887).